A 372-amino-acid chain; its full sequence is Oxoglutarate-dependent flavonoid 7-O-demethylase 1 (372 aa).

Residues 221–321 (GIQALRMNYY…RLSVAAFLNP (101 aa)) form the Fe2OG dioxygenase domain. Residues His-245, Asp-247, and His-302 each coordinate Fe cation. Arg-312 is a binding site for 2-oxoglutarate.

The protein belongs to the iron/ascorbate-dependent oxidoreductase family. Monomer. The cofactor is Fe(2+). L-ascorbate serves as cofactor. In terms of tissue distribution, accumulates in the trichomes of nevadensin-accumulating strains (e.g. cv. SD and cv. EMX-1) and in cv. SW (at protein level) but not in cv. MC.

Its subcellular location is the cytoplasm. The enzyme catalyses gardenin B + 2-oxoglutarate + O2 = nevadensin + formaldehyde + succinate + CO2 + H(+). The catalysed reaction is 8-hydroxysalvigenin + 2-oxoglutarate + O2 = pilosin + formaldehyde + succinate + CO2. The protein operates within flavonoid metabolism. Its activity is regulated as follows. Inhibited by prohexadione-calcium, a 2-oxoglutarate-dependent dioxygenase (2-ODD) inhibitor, thus leading to a decreased abundance of nevadensin (NEV) and absence of pilosin (PIL) production, but to the accumulation of gardenin B (GARD B) and 8-hydroxysalvigenin (8-OH-SALV). In terms of biological role, oxoglutarate-dependent dioxygenase (2-ODD) acting as a flavonoid 7-O-demethylase involved in the biosynthesis of polymethoxylated flavonoids natural products such as nevadensin and salvigenin, aroma compounds which contribute to the flavor of sweet basil, and exhibit pharmacological activities such as anti-allergic, anti-oxidant, antibacterial, anti-proliferative, and anti-inflammatory effects. Catalyzes the 7-O-demethylation of methoxylated flavones; mediates the conversion of 8-hydroxysalvigenin (8-OH-SALV) to pilosin (PIL) and of gardenin B (GARD B) to nevadensin (NEV). This is Oxoglutarate-dependent flavonoid 7-O-demethylase 1 from Ocimum basilicum (Sweet basil).